A 132-amino-acid polypeptide reads, in one-letter code: Replication enhancer protein (132 aa).

The protein belongs to the geminiviridae replication enhancer protein family. In terms of assembly, homooligomer. Interacts with the replication-associated protein (REP). Interacts with host proliferating cell nuclear antigen (PCNA). Interacts with host retinoblastoma-related protein 1 (RBR1), and may thereby deregulate the host cell cycle. Oligomerization and interaction with PCNA are necessary for optimal replication enhancement.

Its function is as follows. Increases viral DNA accumulation. Enhances infectivity and symptom expression. This Tomato mottle virus (isolate Florida) (ToMoV) protein is Replication enhancer protein.